Consider the following 76-residue polypeptide: MQVLVRDNNVDQALRILKKKLQREGVFREMRLREAFEKPSIKKAREKAEAIGRQRKLARKQMQREGLLPTKPRKDK.

Positions 52–76 (GRQRKLARKQMQREGLLPTKPRKDK) are disordered.

It belongs to the bacterial ribosomal protein bS21 family.

The protein is Small ribosomal subunit protein bS21C (rpsU3) of Agrobacterium fabrum (strain C58 / ATCC 33970) (Agrobacterium tumefaciens (strain C58)).